A 574-amino-acid polypeptide reads, in one-letter code: Serine hydroxymethyltransferase (574 aa).

(6S)-5,6,7,8-tetrahydrofolate is bound at residue 180–182; sequence GHL. K288 carries the N6-(pyridoxal phosphate)lysine modification. E306 serves as a coordination point for (6S)-5,6,7,8-tetrahydrofolate.

This sequence belongs to the SHMT family. In terms of assembly, homodimer. Pyridoxal 5'-phosphate is required as a cofactor.

The protein resides in the cytoplasm. The catalysed reaction is (6R)-5,10-methylene-5,6,7,8-tetrahydrofolate + glycine + H2O = (6S)-5,6,7,8-tetrahydrofolate + L-serine. It functions in the pathway one-carbon metabolism; tetrahydrofolate interconversion. The protein operates within amino-acid biosynthesis; glycine biosynthesis; glycine from L-serine: step 1/1. Functionally, catalyzes the reversible interconversion of serine and glycine with tetrahydrofolate (THF) serving as the one-carbon carrier. This reaction serves as the major source of one-carbon groups required for the biosynthesis of purines, thymidylate, methionine, and other important biomolecules. Also exhibits THF-independent aldolase activity toward beta-hydroxyamino acids, producing glycine and aldehydes, via a retro-aldol mechanism. In Treponema pallidum (strain Nichols), this protein is Serine hydroxymethyltransferase.